The following is a 593-amino-acid chain: Isocitrate dehydrogenase kinase/phosphatase (593 aa).

ATP is bound by residues 315 to 321 (APGIRGM) and Lys336. Residue Asp371 is part of the active site.

This sequence belongs to the AceK family.

It localises to the cytoplasm. The catalysed reaction is L-seryl-[isocitrate dehydrogenase] + ATP = O-phospho-L-seryl-[isocitrate dehydrogenase] + ADP + H(+). In terms of biological role, bifunctional enzyme which can phosphorylate or dephosphorylate isocitrate dehydrogenase (IDH) on a specific serine residue. This is a regulatory mechanism which enables bacteria to bypass the Krebs cycle via the glyoxylate shunt in response to the source of carbon. When bacteria are grown on glucose, IDH is fully active and unphosphorylated, but when grown on acetate or ethanol, the activity of IDH declines drastically concomitant with its phosphorylation. This Salmonella typhi protein is Isocitrate dehydrogenase kinase/phosphatase.